Here is a 91-residue protein sequence, read N- to C-terminus: DNA-directed RNA polymerase subunit omega (91 aa).

Belongs to the RNA polymerase subunit omega family. The RNAP catalytic core consists of 2 alpha, 1 beta, 1 beta' and 1 omega subunit. When a sigma factor is associated with the core the holoenzyme is formed, which can initiate transcription.

It carries out the reaction RNA(n) + a ribonucleoside 5'-triphosphate = RNA(n+1) + diphosphate. Its function is as follows. Promotes RNA polymerase assembly. Latches the N- and C-terminal regions of the beta' subunit thereby facilitating its interaction with the beta and alpha subunits. The chain is DNA-directed RNA polymerase subunit omega from Pectobacterium carotovorum subsp. carotovorum (strain PC1).